The sequence spans 842 residues: MDFPSTLRPSLFMAGPLGMTDGPDLSFMCSWRDALTLPGAQPQNCRDQTSSFAKNLLWEPSTPGPLPLVPPGPDPWDPGLAAQDFLFRGGHYYQYQSRVVLDVTEQLSRFLWDHGDIAFAPLGKLMLENFRLEGNRGYSKKVTIVSVKRLLQDLGGHQPWGCPWASLSRRLRRFSILGGPVLSRSVSLLMGRLLHEELATRWEQLLMDEAFTGGALAWLPGRTARAGQLVYPSGGALDKLYFQEVSVNSGGNPRVLEDPGHIQLRGPVRQVVTSTVQGETLLAVRSDYHCAVWKIDKQEPPAPLQVLQVEKGATGISLSPHLSGELAICSRSGTVCLWTPQDGLQTIYKDPETLAFRDPSPWRWADFTAHPRVLTVGDRTGVKMVDIQGPPGCGLLLFCAGAEAACQKGERVLLAQYLGQPGPASTSLHLICTQFSIYLMDERLPLVPMLKWDHGLPSAPLLARLLPPASPGYPRPLLLGGQGGQVQLLHIAGEGTSIPQLAGPPQSLPSITDSLSAFPLLEPKRQQQLQERLEAPVIGLAAAPPCASAPGLLLFQLSAAGDVFYQHLRIQQTSSLREPDHPAPERPASRAAAPPVDQGSTPSWTSRASARCSRWLEALMELSPTNPVWAAPTFSHRRFLGHMERQKSQETLAQKLQAAMAKGQLLRPGDLGTLPKAEPPPAPQCSQQDELTERLTKAWEGQAAAWWKRHQDQTSGSQRQSKRPKRRTQLSSTFSSFTSYMDSPDASSAPHSQDLSNSEACPQPPRTPPSQELTQELWAQGVQHERRQTLRDYMAKLPLQDNPGPVATPPSQTSSRQTRSFRQQTPVLSGSHPPRKKPRMGF.

Disordered stretches follow at residues 574 to 605 (SSLREPDHPAPERPASRAAAPPVDQGSTPSWT), 667 to 690 (RPGDLGTLPKAEPPPAPQCSQQDE), and 702 to 842 (QAAA…RMGF). Positions 577–588 (REPDHPAPERPA) are enriched in basic and acidic residues. Over residues 745–760 (DASSAPHSQDLSNSEA) the composition is skewed to polar residues. Residues 783–794 (QHERRQTLRDYM) show a composition bias toward basic and acidic residues. The residue at position 808 (T808) is a Phosphothreonine. A compositionally biased stretch (low complexity) spans 809 to 826 (PPSQTSSRQTRSFRQQTP). Basic residues predominate over residues 833–842 (PPRKKPRMGF).

In terms of assembly, component of the transcription factor SL1/TIF-IB complex, composed of TBP and at least TAF1A, TAF1B, TAF1C and TAF1D. In the complex interacts directly with TBP, TAF1A and TAF1B. Interaction of the SL1/TIF-IB subunits with TBP excludes interaction of TBP with the transcription factor IID (TFIID) subunits. Interacts with MYC and RRN3. Interacts with p53/TP53; the interaction prevents the association of SL1/TIF-IB with UBTF and represses RNA polymerase I transcription. Part of Pol I pre-initiation complex (PIC), in which Pol I core assembles with RRN3 and promoter-bound UTBF and SL1/TIF-IB complex.

It is found in the nucleus. Its subcellular location is the nucleolus. Functionally, component of the transcription factor SL1/TIF-IB complex, which is involved in the assembly of the PIC (pre-initiation complex) during RNA polymerase I-dependent transcription. The rate of PIC formation probably is primarily dependent on the rate of association of SL1/TIF-IB with the rDNA promoter. SL1/TIF-IB is involved in stabilization of nucleolar transcription factor 1/UBTF on rDNA. Formation of SL1/TIF-IB excludes the association of TBP with TFIID subunits. Recruits RNA polymerase I to the rRNA gene promoter via interaction with RRN3. This is TATA box-binding protein-associated factor, RNA polymerase I, subunit C (Taf1c) from Rattus norvegicus (Rat).